The sequence spans 586 residues: Pyruvate kinase (586 aa).

Position 32 (Arg-32) interacts with substrate. K(+) is bound by residues Asn-34, Ser-36, Asp-66, and Thr-67. 34 to 37 serves as a coordination point for ATP; it reads NFSH. 2 residues coordinate ATP: Arg-73 and Lys-156. Glu-222 provides a ligand contact to Mg(2+). Substrate-binding residues include Gly-245, Asp-246, and Thr-278. Asp-246 provides a ligand contact to Mg(2+).

This sequence belongs to the pyruvate kinase family. In the C-terminal section; belongs to the PEP-utilizing enzyme family. As to quaternary structure, homotetramer. Mg(2+) serves as cofactor. It depends on K(+) as a cofactor.

The catalysed reaction is pyruvate + ATP = phosphoenolpyruvate + ADP + H(+). Its pathway is carbohydrate degradation; glycolysis; pyruvate from D-glyceraldehyde 3-phosphate: step 5/5. The chain is Pyruvate kinase (pyk) from Sporosarcina psychrophila (Bacillus psychrophilus).